A 668-amino-acid polypeptide reads, in one-letter code: tRNA 5-methylaminomethyl-2-thiouridine biosynthesis bifunctional protein MnmC (668 aa).

The segment at 1 to 245 (MKHYSIQPAN…KREMLCGVME (245 aa)) is tRNA (mnm(5)s(2)U34)-methyltransferase. The interval 270–668 (IGGGIASALL…LLKGKAVKAG (399 aa)) is FAD-dependent cmnm(5)s(2)U34 oxidoreductase.

This sequence in the N-terminal section; belongs to the methyltransferase superfamily. tRNA (mnm(5)s(2)U34)-methyltransferase family. In the C-terminal section; belongs to the DAO family. FAD serves as cofactor.

Its subcellular location is the cytoplasm. It catalyses the reaction 5-aminomethyl-2-thiouridine(34) in tRNA + S-adenosyl-L-methionine = 5-methylaminomethyl-2-thiouridine(34) in tRNA + S-adenosyl-L-homocysteine + H(+). Catalyzes the last two steps in the biosynthesis of 5-methylaminomethyl-2-thiouridine (mnm(5)s(2)U) at the wobble position (U34) in tRNA. Catalyzes the FAD-dependent demodification of cmnm(5)s(2)U34 to nm(5)s(2)U34, followed by the transfer of a methyl group from S-adenosyl-L-methionine to nm(5)s(2)U34, to form mnm(5)s(2)U34. The protein is tRNA 5-methylaminomethyl-2-thiouridine biosynthesis bifunctional protein MnmC of Escherichia coli (strain UTI89 / UPEC).